A 373-amino-acid chain; its full sequence is Glutamine synthetase (373 aa).

Position 2 is an N-acetylalanine (Ala2). Residues Ala2–Lys25 are required for glutamine-induced ubiquitination by CRL4(CRBN) and proteasomal degradation. Lys11 and Lys14 each carry N6-acetyllysine. In terms of domain architecture, GS beta-grasp spans Glu24–Gln106. Position 104 is a phosphotyrosine (Tyr104). In terms of domain architecture, GS catalytic spans Leu113–Asn373. An ATP-binding site is contributed by Glu134. Glu134, Glu136, Glu196, and Glu203 together coordinate Mn(2+). An ATP-binding site is contributed by Glu203–Pro208. L-glutamate is bound at residue Asn246–Trp247. His253 serves as a coordination point for Mn(2+). ATP contacts are provided by residues Asn255–Ser257, Arg319, and Arg324. Residue Arg319 participates in L-glutamate binding. Tyr336 to Glu338 provides a ligand contact to ADP. Position 338 (Glu338) interacts with Mn(2+). Arg340 lines the L-glutamate pocket. Position 343 is a phosphoserine (Ser343).

The protein belongs to the glutamine synthetase family. As to quaternary structure, decamer; composed of two pentamers. Interacts with PALMD. Interacts with RHOJ. Interacts with BEST2; this interaction tethers a fraction of GLUL to the membrane, causing a decrease of cytosolic glutamine synthase (GS) activity and inhibits the chloride channel activity of BEST2 by affecting the gating at the aperture in the absence of intracellular glutamate. It depends on Mg(2+) as a cofactor. Requires Mn(2+) as cofactor. Post-translationally, palmitoylated; undergoes autopalmitoylation. Acetylated by EP300/p300; acetylation is stimulated by increased glutamine levels and promotes ubiquitin-mediated proteasomal degradation. In terms of processing, ubiquitinated by ZNRF1. Ubiquitinated by the DCX (DDB1-CUL4-X-box) E3 ubiquitin-protein ligase complex called CRL4(CRBN), leading to proteasomal degradation.

The protein resides in the cytoplasm. Its subcellular location is the cytosol. The protein localises to the microsome. It localises to the mitochondrion. It is found in the cell membrane. The catalysed reaction is L-glutamate + NH4(+) + ATP = L-glutamine + ADP + phosphate + H(+). It carries out the reaction L-cysteinyl-[protein] + hexadecanoyl-CoA = S-hexadecanoyl-L-cysteinyl-[protein] + CoA. With respect to regulation, glutamine synthetase activity is inhibited by methionine sulfoximine (MSO). Glutamine synthetase that catalyzes the ATP-dependent conversion of glutamate and ammonia to glutamine. Its role depends on tissue localization: in the brain, it regulates the levels of toxic ammonia and converts neurotoxic glutamate to harmless glutamine, whereas in the liver, it is one of the enzymes responsible for the removal of ammonia. Plays a key role in ammonium detoxification during erythropoiesis: the glutamine synthetase activity is required to remove ammonium generated by porphobilinogen deaminase (HMBS) during heme biosynthesis to prevent ammonium accumulation and oxidative stress. Essential for proliferation of fetal skin fibroblasts. Independently of its glutamine synthetase activity, required for endothelial cell migration during vascular development. Involved in angiogenesis by regulating membrane localization and activation of the GTPase RHOJ, possibly by promoting RHOJ palmitoylation. May act as a palmitoyltransferase for RHOJ: able to autopalmitoylate and then transfer the palmitoyl group to RHOJ. Plays a role in ribosomal 40S subunit biogenesis. Through the interaction with BEST2, inhibits BEST2 channel activity by affecting the gating at the aperture in the absence of intracellular L-glutamate, but sensitizes BEST2 to intracellular L-glutamate, which promotes the opening of BEST2 and thus relieves its inhibitory effect on BEST2. In Cricetulus griseus (Chinese hamster), this protein is Glutamine synthetase.